Reading from the N-terminus, the 619-residue chain is Probable serine/threonine-protein kinase WNK8 (619 aa).

Residues 1–14 (MSGARRCGDRRSER) show a composition bias toward basic and acidic residues. Residues 1–30 (MSGARRCGDRRSERSSVVGDNRNGYVETDP) form a disordered region. Positions 35 to 291 (GRLSEVLGKG…AEELLLDPFL (257 aa)) constitute a Protein kinase domain. Residues 115-118 (TELF) and Lys-163 each bind ATP. The active-site Proton acceptor is Asp-180. Disordered regions lie at residues 293–335 (PPQN…AKTT), 419–464 (YADD…PGPH), 508–555 (CSAS…SMVD), and 585–619 (GFRDPTTYGSSSSSSSSQHRRRSSSKVDHKHHYMF). The span at 419–428 (YADDDDDDDV) shows a compositional bias: acidic residues. The segment covering 439–448 (SSSPTSSQGS) has biased composition (low complexity). Residues 602–619 (QHRRRSSSKVDHKHHYMF) are compositionally biased toward basic residues.

This sequence belongs to the protein kinase superfamily. Ser/Thr protein kinase family. WNK subfamily.

It catalyses the reaction L-seryl-[protein] + ATP = O-phospho-L-seryl-[protein] + ADP + H(+). The catalysed reaction is L-threonyl-[protein] + ATP = O-phospho-L-threonyl-[protein] + ADP + H(+). The chain is Probable serine/threonine-protein kinase WNK8 (WNK8) from Oryza sativa subsp. japonica (Rice).